The primary structure comprises 175 residues: Ribosome maturation factor RimM (175 aa).

Residues 99–171 enclose the PRC barrel domain; it reads AGEYYWFQLK…RILFDLPDGL (73 aa).

It belongs to the RimM family. In terms of assembly, binds ribosomal protein uS19.

Its subcellular location is the cytoplasm. In terms of biological role, an accessory protein needed during the final step in the assembly of 30S ribosomal subunit, possibly for assembly of the head region. Essential for efficient processing of 16S rRNA. May be needed both before and after RbfA during the maturation of 16S rRNA. It has affinity for free ribosomal 30S subunits but not for 70S ribosomes. The chain is Ribosome maturation factor RimM from Syntrophotalea carbinolica (strain DSM 2380 / NBRC 103641 / GraBd1) (Pelobacter carbinolicus).